The sequence spans 434 residues: 3-phosphoshikimate 1-carboxyvinyltransferase (434 aa).

Residues lysine 22, serine 23, and arginine 27 each contribute to the 3-phosphoshikimate site. Lysine 22 lines the phosphoenolpyruvate pocket. Phosphoenolpyruvate contacts are provided by glycine 94 and arginine 122. Positions 169, 170, 171, 199, 320, and 347 each coordinate 3-phosphoshikimate. Glutamine 171 contacts phosphoenolpyruvate. Aspartate 320 functions as the Proton acceptor in the catalytic mechanism. The phosphoenolpyruvate site is built by arginine 351, arginine 395, and lysine 420.

This sequence belongs to the EPSP synthase family. As to quaternary structure, monomer.

It localises to the cytoplasm. The enzyme catalyses 3-phosphoshikimate + phosphoenolpyruvate = 5-O-(1-carboxyvinyl)-3-phosphoshikimate + phosphate. It functions in the pathway metabolic intermediate biosynthesis; chorismate biosynthesis; chorismate from D-erythrose 4-phosphate and phosphoenolpyruvate: step 6/7. Its function is as follows. Catalyzes the transfer of the enolpyruvyl moiety of phosphoenolpyruvate (PEP) to the 5-hydroxyl of shikimate-3-phosphate (S3P) to produce enolpyruvyl shikimate-3-phosphate and inorganic phosphate. The protein is 3-phosphoshikimate 1-carboxyvinyltransferase of Ralstonia pickettii (strain 12J).